We begin with the raw amino-acid sequence, 296 residues long: Lipoyl synthase (296 aa).

[4Fe-4S] cluster contacts are provided by cysteine 37, cysteine 42, cysteine 48, cysteine 63, cysteine 67, cysteine 70, and serine 276. Residues tryptophan 49–leucine 265 form the Radical SAM core domain.

It belongs to the radical SAM superfamily. Lipoyl synthase family. Requires [4Fe-4S] cluster as cofactor.

It is found in the cytoplasm. The catalysed reaction is [[Fe-S] cluster scaffold protein carrying a second [4Fe-4S](2+) cluster] + N(6)-octanoyl-L-lysyl-[protein] + 2 oxidized [2Fe-2S]-[ferredoxin] + 2 S-adenosyl-L-methionine + 4 H(+) = [[Fe-S] cluster scaffold protein] + N(6)-[(R)-dihydrolipoyl]-L-lysyl-[protein] + 4 Fe(3+) + 2 hydrogen sulfide + 2 5'-deoxyadenosine + 2 L-methionine + 2 reduced [2Fe-2S]-[ferredoxin]. It functions in the pathway protein modification; protein lipoylation via endogenous pathway; protein N(6)-(lipoyl)lysine from octanoyl-[acyl-carrier-protein]: step 2/2. Functionally, catalyzes the radical-mediated insertion of two sulfur atoms into the C-6 and C-8 positions of the octanoyl moiety bound to the lipoyl domains of lipoate-dependent enzymes, thereby converting the octanoylated domains into lipoylated derivatives. The sequence is that of Lipoyl synthase from Rickettsia canadensis (strain McKiel).